The following is a 150-amino-acid chain: Histone H3-like centromeric protein A (150 aa).

Residues 1-56 (MRPGSTPASRRKSRPPRRVSPPLPTTSTRSPGRPSAPEQRKAPRATPKKRFRPGTR) are disordered. The span at 25 to 37 (TTSTRSPGRPSAP) shows a compositional bias: low complexity. The segment covering 42–53 (APRATPKKRFRP) has biased composition (basic residues). An H3-like region spans residues 53-150 (PGTRALMEIR…RIRGVTEGLG (98 aa)).

It belongs to the histone H3 family. In terms of assembly, component of centromeric nucleosomes, where DNA is wrapped around a histone octamer core. The octamer contains two molecules each of H2A, H2B, CENPA and H4 assembled in one CENPA-H4 heterotetramer and two H2A-H2B heterodimers. CENPA modulates the DNA-binding characteristics of nucleosomes so that protruding DNA ends have higher flexibility than in nucleosomes containing conventional histone H3.

It localises to the nucleus. It is found in the chromosome. Its subcellular location is the centromere. Histone H3-like nucleosomal protein that is specifically found in centromeric nucleosomes. Replaces conventional H3 in the nucleosome core of centromeric chromatin that serves as an assembly site for the inner kinetochore. The presence of CENPA subtly modifies the nucleosome structure and the way DNA is wrapped around the nucleosome and gives rise to protruding DNA ends that are less well-ordered and rigid compared to nucleosomes containing histone H3. May serve as an epigenetic mark that propagates centromere identity through replication and cell division. Required for recruitment and assembly of kinetochore proteins, and as a consequence required for progress through mitosis, chromosome segregation and cytokinesis. The chain is Histone H3-like centromeric protein A (cenpa) from Xenopus tropicalis (Western clawed frog).